A 285-amino-acid chain; its full sequence is Phasyl DNA replicon protein arp (285 aa).

Functionally, essential for autonomous replication of the phasyl DNA replicon. This Escherichia coli protein is Phasyl DNA replicon protein arp (arp).